Here is a 112-residue protein sequence, read N- to C-terminus: MKHSACEHCSTPVEGALRLPRRFGRALIWLYRHTLSPLVGYNCRHLPTCSVYGDEAIERFGLWAGGWMTLARLLRCNPFGTSGIDNVPLAAPQDARWYLPWRYGRWRGVNAP.

This sequence belongs to the UPF0161 family.

Its subcellular location is the cell inner membrane. In terms of biological role, could be involved in insertion of integral membrane proteins into the membrane. The chain is Putative membrane protein insertion efficiency factor from Bradyrhizobium diazoefficiens (strain JCM 10833 / BCRC 13528 / IAM 13628 / NBRC 14792 / USDA 110).